The following is a 445-amino-acid chain: Histamine H3 receptor (445 aa).

Residues 1–39 are Extracellular-facing; the sequence is MERAPPDGPLNASGALAGEAAAAGGARGFSAAWTAVLAA. N-linked (GlcNAc...) asparagine glycosylation occurs at Asn11. A helical membrane pass occupies residues 40–60; the sequence is LMALLIVATVLGNALVMLAFV. Over 61–70 the chain is Cytoplasmic; that stretch reads ADSSLRTQNN. Residues 71–91 traverse the membrane as a helical segment; the sequence is FFLLNLAISDFLVGAFCIPLY. Residues 92-108 are Extracellular-facing; that stretch reads VPYVLTGRWTFGRGLCK. A disulfide bond links Cys107 and Cys188. Residues 109–129 traverse the membrane as a helical segment; that stretch reads LWLVVDYLLCTSSAFNIVLIS. Residues 130–156 are Cytoplasmic-facing; that stretch reads YDRFLSVTRAVSYRAQQGDTRRAVRKM. A helical transmembrane segment spans residues 157–177; that stretch reads LLVWVLAFLLYGPAILSWEYL. At 178–196 the chain is on the extracellular side; the sequence is SGGSSIPEGHCYAEFFYNW. Residues 197–217 form a helical membrane-spanning segment; it reads YFLITASTLEFFTPFLSVTFF. The Cytoplasmic portion of the chain corresponds to 218–359; the sequence is NLSIYLNIQR…LSRDRKVAKS (142 aa). Disordered regions lie at residues 237 to 260 and 288 to 336; these read REAA…GCWG and EATL…LEKR. The segment covering 242-257 has biased composition (pro residues); it reads PEPPPEAQPSPPPPPG. Residues 290 to 299 are compositionally biased toward gly residues; that stretch reads TLGGGGGGGS. Over residues 300–312 the composition is skewed to low complexity; that stretch reads VASPTSSSGSSSR. The chain crosses the membrane as a helical span at residues 360–380; the sequence is LAVIVSIFGLCWAPYTLLMII. The Extracellular portion of the chain corresponds to 381–395; that stretch reads RAACHGHCVPDYWYE. The helical transmembrane segment at 396 to 416 threads the bilayer; sequence TSFWLLWANSAVNPVLYPLCH. Topologically, residues 417-445 are cytoplasmic; it reads HSFRRAFTKLLCPQKLKIQPHSSLEHCWK. Residue Ser439 is modified to Phosphoserine.

Belongs to the G-protein coupled receptor 1 family. As to expression, expressed predominantly in the CNS, with the greatest expression in the thalamus and caudate nucleus. The various isoforms are mainly coexpressed in brain, but their relative expression level varies in a region-specific manner. Isoform 3 and isoform 7 are highly expressed in the thalamus, caudate nucleus and cerebellum while isoform 5 and isoform 6 show a poor expression. Isoform 5 and isoform 6 show a high expression in the amygdala, substantia nigra, cerebral cortex and hypothalamus. Isoform 7 is not found in hypothalamus or substantia nigra.

The protein resides in the cell membrane. In terms of biological role, the H3 subclass of histamine receptors could mediate the histamine signals in CNS and peripheral nervous system. Signals through the inhibition of adenylate cyclase and displays high constitutive activity (spontaneous activity in the absence of agonist). Agonist stimulation of isoform 3 neither modified adenylate cyclase activity nor induced intracellular calcium mobilization. This is Histamine H3 receptor (HRH3) from Homo sapiens (Human).